A 508-amino-acid chain; its full sequence is Light-independent protochlorophyllide reductase subunit B (508 aa).

D36 lines the [4Fe-4S] cluster pocket. D294 serves as the catalytic Proton donor. 429-430 (GM) is a binding site for substrate.

The protein belongs to the ChlB/BchB/BchZ family. Protochlorophyllide reductase is composed of three subunits; ChlL, ChlN and ChlB. Forms a heterotetramer of two ChlB and two ChlN subunits. It depends on [4Fe-4S] cluster as a cofactor.

It carries out the reaction chlorophyllide a + oxidized 2[4Fe-4S]-[ferredoxin] + 2 ADP + 2 phosphate = protochlorophyllide a + reduced 2[4Fe-4S]-[ferredoxin] + 2 ATP + 2 H2O. The protein operates within porphyrin-containing compound metabolism; chlorophyll biosynthesis (light-independent). Its function is as follows. Component of the dark-operative protochlorophyllide reductase (DPOR) that uses Mg-ATP and reduced ferredoxin to reduce ring D of protochlorophyllide (Pchlide) to form chlorophyllide a (Chlide). This reaction is light-independent. The NB-protein (ChlN-ChlB) is the catalytic component of the complex. The sequence is that of Light-independent protochlorophyllide reductase subunit B from Nostoc sp. (strain PCC 7120 / SAG 25.82 / UTEX 2576).